The sequence spans 232 residues: Large ribosomal subunit protein uL3 (232 aa).

The protein belongs to the universal ribosomal protein uL3 family. Part of the 50S ribosomal subunit. Forms a cluster with proteins L14 and L19.

Functionally, one of the primary rRNA binding proteins, it binds directly near the 3'-end of the 23S rRNA, where it nucleates assembly of the 50S subunit. The sequence is that of Large ribosomal subunit protein uL3 from Sorangium cellulosum (strain So ce56) (Polyangium cellulosum (strain So ce56)).